The following is a 523-amino-acid chain: Arabinose import ATP-binding protein AraG (523 aa).

ABC transporter domains follow at residues 20-255 and 268-511; these read LAFR…MVGR and IGSE…MLRT. An ATP-binding site is contributed by 52 to 59; that stretch reads GENGAGKS.

This sequence belongs to the ABC transporter superfamily. Arabinose importer (TC 3.A.1.2.2) family. The complex is composed of two ATP-binding proteins (AraG), two transmembrane proteins (AraH) and a solute-binding protein (AraF).

The protein resides in the cell inner membrane. The enzyme catalyses L-arabinose(out) + ATP + H2O = L-arabinose(in) + ADP + phosphate + H(+). In terms of biological role, part of the ABC transporter complex AraFGH involved in arabinose import. Responsible for energy coupling to the transport system. This chain is Arabinose import ATP-binding protein AraG, found in Yersinia pestis bv. Antiqua (strain Antiqua).